The primary structure comprises 335 residues: 2-acylglycerol O-acyltransferase 1 (335 aa).

The next 2 helical transmembrane spans lie at 24–44 (WVFS…SLVL) and 47–67 (LWLI…TPQA). N-linked (GlcNAc...) asparagine glycans are attached at residues N77, N125, and N180.

This sequence belongs to the diacylglycerol acyltransferase family.

It is found in the endoplasmic reticulum membrane. It carries out the reaction a 2-acylglycerol + an acyl-CoA = a 1,2-diacylglycerol + CoA. The enzyme catalyses a 2-acylglycerol + an acyl-CoA = a 1,2-diacyl-sn-glycerol + CoA. The catalysed reaction is a 2-acylglycerol + an acyl-CoA = a 2,3-diacyl-sn-glycerol + CoA. It catalyses the reaction a 1-acylglycerol + an acyl-CoA = a 1,2-diacylglycerol + CoA. It carries out the reaction a 1-acylglycerol + an acyl-CoA = a 1,3-diacylglycerol + CoA. The enzyme catalyses a 1-acyl-sn-glycerol + an acyl-CoA = a 1,3-diacyl-sn-glycerol + CoA. The catalysed reaction is a 3-acyl-sn-glycerol + an acyl-CoA = a 1,3-diacyl-sn-glycerol + CoA. It functions in the pathway glycerolipid metabolism; triacylglycerol biosynthesis. Functionally, involved in glycerolipid synthesis and lipid metabolism. Catalyzes the formation of diacylglycerol, the precursor of triacylglycerol, by transferring the acyl chain of a fatty acyl-CoA to a monoacylglycerol, mainly at the sn-1 or sn-3 positions. It uses both sn-2-monoacylglycerol (2-acylglycerol) and sn-1-monoacylglycerol (1-acyl-sn-glycerol) equally well as substrates, and uses sn-3-monoacylglycerol (3-acyl-sn-glycerol) with lower efficiency. The protein is 2-acylglycerol O-acyltransferase 1 (mogat1) of Xenopus tropicalis (Western clawed frog).